The primary structure comprises 408 residues: UDP-N-acetylglucosamine--dolichyl-phosphate N-acetylglucosaminephosphotransferase (408 aa).

At M1–P10 the chain is on the lumenal side. A helical transmembrane segment spans residues L11–A38. The Cytoplasmic segment spans residues A39–Q58. Residues Q44 to L46 and E56 contribute to the UDP-N-acetyl-alpha-D-glucosamine site. The helical transmembrane segment at G59 to F78 threads the bilayer. The Lumenal portion of the chain corresponds to L79–P91. The helical transmembrane segment at H92–L118 threads the bilayer. The Cytoplasmic segment spans residues N119–R121. A helical transmembrane segment spans residues W122 to N143. K125 lines the dolichyl phosphate pocket. The Lumenal portion of the chain corresponds to F144–G166. N146 carries an N-linked (GlcNAc...) asparagine glycan. The helical transmembrane segment at I167 to I186 threads the bilayer. Dolichyl phosphate is bound at residue V178–I186. N185 contributes to the Mg(2+) binding site. The Cytoplasmic segment spans residues L187 to G192. UDP-N-acetyl-alpha-D-glucosamine is bound at residue N191. A helical membrane pass occupies residues L193–L213. The Lumenal segment spans residues E214–R218. A helical transmembrane segment spans residues D219 to N242. At W243–V250 the chain is on the cytoplasmic side. A helical transmembrane segment spans residues G251–G269. Mg(2+) is bound at residue D252. The Lumenal segment spans residues H270–F271. Residues S272 to L293 traverse the membrane as a helical segment. The Cytoplasmic segment spans residues L294–H375. Residue R301 to R303 participates in UDP-N-acetyl-alpha-D-glucosamine binding. A helical membrane pass occupies residues E376 to Q400. The Lumenal portion of the chain corresponds to L401–V408.

The protein belongs to the glycosyltransferase 4 family. In terms of assembly, homodimer. Mg(2+) serves as cofactor.

The protein localises to the endoplasmic reticulum membrane. The enzyme catalyses a di-trans,poly-cis-dolichyl phosphate + UDP-N-acetyl-alpha-D-glucosamine = an N-acetyl-alpha-D-glucosaminyl-diphospho-di-trans,poly-cis-dolichol + UMP. It functions in the pathway protein modification; protein glycosylation. Inhibited by natural nucleoside antibiotic tunicamycin, which acts as a structural analog and competitor of UDP-GlcNAc. Functionally, UDP-N-acetylglucosamine--dolichyl-phosphate N-acetylglucosaminephosphotransferase that operates in the biosynthetic pathway of dolichol-linked oligosaccharides, the glycan precursors employed in protein asparagine (N)-glycosylation. The assembly of dolichol-linked oligosaccharides begins on the cytosolic side of the endoplasmic reticulum membrane and finishes in its lumen. The sequential addition of sugars to dolichol pyrophosphate produces dolichol-linked oligosaccharides containing fourteen sugars, including two GlcNAcs, nine mannoses and three glucoses. Once assembled, the oligosaccharide is transferred from the lipid to nascent proteins by oligosaccharyltransferases. Catalyzes the initial step of dolichol-linked oligosaccharide biosynthesis, transfering GlcNAc-1-P from cytosolic UDP-GlcNAc onto the carrier lipid dolichyl phosphate (P-dolichol), yielding GlcNAc-P-P-dolichol embedded in the cytoplasmic leaflet of the endoplasmic reticulum membrane. This is UDP-N-acetylglucosamine--dolichyl-phosphate N-acetylglucosaminephosphotransferase (DPAGT1) from Cricetulus griseus (Chinese hamster).